We begin with the raw amino-acid sequence, 72 residues long: Bowman-Birk type trypsin inhibitor (72 aa).

7 disulfides stabilise this stretch: cysteine 12–cysteine 66, cysteine 13–cysteine 28, cysteine 16–cysteine 62, cysteine 18–cysteine 26, cysteine 36–cysteine 43, cysteine 40–cysteine 55, and cysteine 45–cysteine 53.

Belongs to the Bowman-Birk serine protease inhibitor family.

In Vigna radiata var. radiata (Mung bean), this protein is Bowman-Birk type trypsin inhibitor.